The chain runs to 248 residues: Tetraspanin-17 (248 aa).

Topologically, residues 1-7 (MSEVRTG) are cytoplasmic. A helical membrane pass occupies residues 8–28 (FLTMTTIILISIGLTMMGTGL). At 29–44 (YQKTTMSSCIRETSSQ) the chain is on the extracellular side. A helical transmembrane segment spans residues 45–65 (FTLLGLLLLLIPQIGLYGICC). The Cytoplasmic portion of the chain corresponds to 66 to 69 (RSKR). A helical membrane pass occupies residues 70–90 (LFNFFFYGMVVLIIIVSYYSI). The Extracellular segment spans residues 91-210 (KCSIYNTTFG…ILKAIVHQWK (120 aa)). 3 N-linked (GlcNAc...) asparagine glycosylation sites follow: Asn-96, Asn-109, and Asn-141. Residues 211 to 231 (YLSMFAYPALVLSCISLAIAW) traverse the membrane as a helical segment. Residues 232 to 248 (SLKETIHENEDYRGSYS) lie on the Cytoplasmic side of the membrane.

Belongs to the tetraspanin (TM4SF) family.

It localises to the membrane. Functionally, may be involved in the regulation of cell differentiation. The sequence is that of Tetraspanin-17 (TET17) from Arabidopsis thaliana (Mouse-ear cress).